The chain runs to 734 residues: Tripartite terminase subunit 3 (734 aa).

A Nuclear localization signal motif is present at residues 183 to 189 (PKKRAKV). The Walker A motif motif lies at 258-265 (VPRRHGKT). Positions 352–357 (LLFVDE) match the Walker B motif motif. The active-site For ATPase activity is E357. Catalysis depends on for nuclease activity residues D509, E581, and D706.

Belongs to the herpesviridae TRM3 protein family. Interacts with the terminase subunits TRM1 and TRM2. Interacts with portal protein.

It is found in the host nucleus. Its function is as follows. Component of the molecular motor that translocates viral genomic DNA in empty capsid during DNA packaging. Forms a tripartite terminase complex together with TRM1 and TRM2 in the host cytoplasm. Once the complex reaches the host nucleus, it interacts with the capsid portal vertex. This portal forms a ring in which genomic DNA is translocated into the capsid. TRM3 carries an RNase H-like nuclease activity that plays an important role for the cleavage of concatemeric viral DNA into unit length genomes. In Human herpesvirus 2 (strain HG52) (HHV-2), this protein is Tripartite terminase subunit 3.